A 95-amino-acid chain; its full sequence is Large ribosomal subunit protein bL25 (95 aa).

The protein belongs to the bacterial ribosomal protein bL25 family. Part of the 50S ribosomal subunit; part of the 5S rRNA/L5/L18/L25 subcomplex. Contacts the 5S rRNA. Binds to the 5S rRNA independently of L5 and L18.

In terms of biological role, this is one of the proteins that binds to the 5S RNA in the ribosome where it forms part of the central protuberance. This is Large ribosomal subunit protein bL25 from Shewanella frigidimarina (strain NCIMB 400).